A 153-amino-acid polypeptide reads, in one-letter code: Superoxide dismutase [Cu-Zn] (153 aa).

Cu cation contacts are provided by histidine 45, histidine 47, and histidine 62. The cysteines at positions 56 and 145 are disulfide-linked. Residues histidine 62, histidine 70, histidine 79, and aspartate 82 each coordinate Zn(2+). Residue histidine 119 coordinates Cu cation.

Belongs to the Cu-Zn superoxide dismutase family. As to quaternary structure, homodimer. It depends on Cu cation as a cofactor. The cofactor is Zn(2+).

Its subcellular location is the cytoplasm. The enzyme catalyses 2 superoxide + 2 H(+) = H2O2 + O2. Its function is as follows. Destroys radicals which are normally produced within the cells and which are toxic to biological systems. This is Superoxide dismutase [Cu-Zn] from Drosophila yakuba (Fruit fly).